The chain runs to 88 residues: Small ribosomal subunit protein uS15 (88 aa).

It belongs to the universal ribosomal protein uS15 family. As to quaternary structure, part of the 30S ribosomal subunit. Forms a bridge to the 50S subunit in the 70S ribosome, contacting the 23S rRNA.

One of the primary rRNA binding proteins, it binds directly to 16S rRNA where it helps nucleate assembly of the platform of the 30S subunit by binding and bridging several RNA helices of the 16S rRNA. Its function is as follows. Forms an intersubunit bridge (bridge B4) with the 23S rRNA of the 50S subunit in the ribosome. The sequence is that of Small ribosomal subunit protein uS15 from Mycoplasmopsis pulmonis (strain UAB CTIP) (Mycoplasma pulmonis).